The following is a 656-amino-acid chain: Leucine-rich repeat-containing protein 43 (656 aa).

Residues 1–13 (MEASYESESESES) are compositionally biased toward acidic residues. The disordered stretch occupies residues 1–25 (MEASYESESESESEAGPGTQRPGTG). LRR repeat units follow at residues 150-170 (KLEE…TNLP), 172-193 (TLKV…CAHP), 196-215 (GLQH…ESLY), and 223-244 (NLVS…VTSL). The LRRCT domain maps to 258-296 (NPLALVPYYRGLTIDSLAQLCVLDDITVSPNEKHLFRGL). Positions 512-554 (LSAKKGKGEKDKKGKEKDRTGKGEKEPAKEWKVLKKKKEPPKE) are disordered. Positions 517–544 (GKGEKDKKGKEKDRTGKGEKEPAKEWKV) are enriched in basic and acidic residues.

This Homo sapiens (Human) protein is Leucine-rich repeat-containing protein 43 (LRRC43).